We begin with the raw amino-acid sequence, 80 residues long: Beta-toxin KAaH1 (80 aa).

The signal sequence occupies residues 1–22 (MMKLMLFSIIVILFSLIGSIHG). In terms of domain architecture, LCN-type CS-alpha/beta spans 25 to 80 (VPGNYPLDSSDDTYLCAPLGENPFCIKICRKHGVKYGYCYAFQCWCEYLEDKNVKI). Disulfide bonds link Cys40-Cys63, Cys49-Cys68, and Cys53-Cys70.

This sequence belongs to the long (3 C-C) scorpion toxin superfamily. Sodium/Potassium channel inhibitor family. In terms of tissue distribution, expressed by the venom gland.

Its subcellular location is the secreted. In terms of biological role, inhibits the vertebrate potassium channels Kv1.1/KCNA1 and Kv1.3/KCNA3 in vitro with an IC(50) of 5.3 nM and 50.0 nM respectively. This Androctonus australis (Sahara scorpion) protein is Beta-toxin KAaH1.